Consider the following 337-residue polypeptide: Gastrula zinc finger protein XlCGF26.1 (337 aa).

12 C2H2-type zinc fingers span residues 6-28, 34-56, 62-84, 90-112, 118-140, 146-168, 174-196, 202-224, 230-252, 258-280, 286-309, and 315-337; these read FDCT…YKIH, FICA…SKIH, FPCT…NKIH, FTCT…VKIH, FTCT…NKIH, FTCT…FKIH, and FSCT…KRTH.

It belongs to the krueppel C2H2-type zinc-finger protein family.

The protein localises to the nucleus. Its function is as follows. May be involved in transcriptional regulation. This is Gastrula zinc finger protein XlCGF26.1 from Xenopus laevis (African clawed frog).